Reading from the N-terminus, the 149-residue chain is Transthyretin (149 aa).

The N-terminal stretch at 1-20 (MAFHSLLLLCLAGLAFVSET) is a signal peptide. Cys-32 carries the sulfocysteine modification. Lys-37 lines the L-thyroxine pocket. Glu-64 carries the 4-carboxyglutamate modification. Residues Glu-76 and Ser-139 each contribute to the L-thyroxine site.

This sequence belongs to the transthyretin family. In terms of assembly, homotetramer. Dimer of dimers. In the homotetramer, subunits assemble around a central channel that can accommodate two ligand molecules. Interacts with RBP4. Sulfonation of the reactive cysteine Cys-32 enhances the stability of the native conformation of TTR, avoiding misassembly of the protein leading to amyloid formation.

The protein resides in the secreted. Thyroid hormone-binding protein. Probably transports thyroxine from the bloodstream to the brain. The chain is Transthyretin (TTR) from Notamacropus eugenii (Tammar wallaby).